The primary structure comprises 553 residues: RNA N(6)-adenosine-methyltransferase METTL16 (553 aa).

The interval 17–20 is RNA-binding; the sequence is PPDF. S-adenosyl-L-methionine-binding residues include R82, G110, S114, E133, T164, and N184. The K-loop stretch occupies residues 163–167; it reads KTLLM. RNA-binding stretches follow at residues 199–211, 250–254, and 277–283; these read SRNS…SSVN, GKKCS, and QGRTMRW. The interval 289–400 is VCR 1; that stretch reads FYDDVTVPSP…QLREVPRAPE (112 aa). Phosphoserine occurs at positions 329, 425, and 429. Residues 457 to 496 form a disordered region; sequence EETPEATEDERDEERGGMEAMESCKGSSNGAQDGEASEKG. The span at 458 to 468 shows a compositional bias: acidic residues; that stretch reads ETPEATEDERD. T463 carries the post-translational modification Phosphothreonine. Positions 506-553 are VCR 2; it reads YLFKCLVNIKKEAGDAVVEMHWVEGQNRDLMNQLCTYVRNQILRLVAS.

This sequence belongs to the methyltransferase superfamily. METTL16/RlmF family. Interacts with MEPCE. Interacts with LARP7.

The protein resides in the nucleus. It is found in the cytoplasm. The catalysed reaction is adenosine in U6 snRNA + S-adenosyl-L-methionine = N(6)-methyladenosine in U6 snRNA + S-adenosyl-L-homocysteine + H(+). The enzyme catalyses an adenosine in mRNA + S-adenosyl-L-methionine = an N(6)-methyladenosine in mRNA + S-adenosyl-L-homocysteine + H(+). Its activity is regulated as follows. Methyltransferase activity is autoinhibited by the K-loop region that blocks S-adenosyl-L-methionine-binding. Upon activation, K-loop changes conformation, allowing S-adenosyl-L-methionine-binding and subsequent methyltransferase activity. mRNA N6-adenosine-methyltransferase activity is inhibited by zinc. Its function is as follows. RNA N6-methyltransferase that methylates adenosine residues at the N(6) position of a subset of RNAs and is involved in S-adenosyl-L-methionine homeostasis by regulating expression of MAT2A transcripts. Able to N6-methylate a subset of mRNAs and U6 small nuclear RNAs (U6 snRNAs). In contrast to the METTL3-METTL14 heterodimer, only able to methylate a limited number of RNAs: requires both a 5'UACAGAGAA-3' nonamer sequence and a specific RNA structure. Plays a key role in S-adenosyl-L-methionine homeostasis by mediating N6-methylation of MAT2A mRNAs, altering splicing of MAT2A transcripts: in presence of S-adenosyl-L-methionine, binds the 3'-UTR region of MAT2A mRNA and specifically N6-methylates the first hairpin of MAT2A mRNA, preventing recognition of their 3'-splice site by U2AF1/U2AF35, thereby inhibiting splicing and protein production of S-adenosylmethionine synthase. In S-adenosyl-L-methionine-limiting conditions, binds the 3'-UTR region of MAT2A mRNA but stalls due to the lack of a methyl donor, preventing N6-methylation and promoting expression of MAT2A. In addition to mRNAs, also able to mediate N6-methylation of U6 small nuclear RNA (U6 snRNA): specifically N6-methylates adenine in position 43 of U6 snRNAs. Also able to bind various lncRNAs, such as 7SK snRNA (7SK RNA) or 7SL RNA. Specifically binds the 3'-end of the MALAT1 long non-coding RNA. This Mus musculus (Mouse) protein is RNA N(6)-adenosine-methyltransferase METTL16.